Consider the following 312-residue polypeptide: Glyoxylate/hydroxypyruvate reductase A (312 aa).

Arginine 227 is a catalytic residue. Histidine 275 acts as the Proton donor in catalysis.

The protein belongs to the D-isomer specific 2-hydroxyacid dehydrogenase family. GhrA subfamily.

It is found in the cytoplasm. The catalysed reaction is glycolate + NADP(+) = glyoxylate + NADPH + H(+). It catalyses the reaction (R)-glycerate + NAD(+) = 3-hydroxypyruvate + NADH + H(+). The enzyme catalyses (R)-glycerate + NADP(+) = 3-hydroxypyruvate + NADPH + H(+). Functionally, catalyzes the NADPH-dependent reduction of glyoxylate and hydroxypyruvate into glycolate and glycerate, respectively. This chain is Glyoxylate/hydroxypyruvate reductase A, found in Citrobacter koseri (strain ATCC BAA-895 / CDC 4225-83 / SGSC4696).